Consider the following 117-residue polypeptide: Circadian clock oscillator protein KaiB (117 aa).

Belongs to the KaiB family. May undergo a major conformational rearrangment; in the free state forms homooligomers. When bound to KaiC switches to a monomeric thioredoxin-fold (KaiB(fs)). The active oscillator complex is probably KaiC(6):KaiB(6).

In terms of biological role, component of the KaiBC clock protein complex, which constitutes the main circadian regulator in cyanobacteria; it may modify the ATPase activity of KaiC. May be a metamorphic protein which reversibly switches between an inactive tetrameric fold and a rare, thioredoxin-like monomeric fold (KaiB(fs)). KaiB(fs) binds phospho-KaiC, and perhaps clock output effectors. In Prochlorococcus marinus (strain SARG / CCMP1375 / SS120), this protein is Circadian clock oscillator protein KaiB.